A 117-amino-acid polypeptide reads, in one-letter code: Immunoglobulin heavy variable 1-84 (117 aa).

The first 19 residues, 1 to 19 (MGWSWIFLFLLSGTAGVHC), serve as a signal peptide directing secretion. A framework-1 region spans residues 20-49 (QIQLQQSGPELVKPGASVKISCKASGYTFT). The Ig-like domain occupies 31-117 (VKPGASVKIS…EDSAVYFCAR (87 aa)). A disulfide bond links cysteine 41 and cysteine 115. The segment at 50 to 54 (DYYIN) is complementarity-determining-1. Residues 55 to 68 (WVKQRPGQGLEWIG) are framework-2. Residues 69–85 (WIYPGSGNTKYNEKFKG) are complementarity-determining-2. The tract at residues 86–117 (KATLTVDTSSSTAYMQLSSLTSEDSAVYFCAR) is framework-3.

The polypeptide is Immunoglobulin heavy variable 1-84 (Mus musculus (Mouse)).